Reading from the N-terminus, the 240-residue chain is Ribose-5-phosphate isomerase A (240 aa).

The segment at 1 to 23 (MKTSGGSDAAKRRAGESAAETVT) is disordered. Substrate is bound by residues 32–35 (TGST), 92–95 (DGAD), and 111–114 (KGGG). Glutamate 120 acts as the Proton acceptor in catalysis. Lysine 138 lines the substrate pocket.

This sequence belongs to the ribose 5-phosphate isomerase family. As to quaternary structure, homodimer.

It carries out the reaction aldehydo-D-ribose 5-phosphate = D-ribulose 5-phosphate. It participates in carbohydrate degradation; pentose phosphate pathway; D-ribose 5-phosphate from D-ribulose 5-phosphate (non-oxidative stage): step 1/1. In terms of biological role, catalyzes the reversible conversion of ribose-5-phosphate to ribulose 5-phosphate. In Halorubrum lacusprofundi (strain ATCC 49239 / DSM 5036 / JCM 8891 / ACAM 34), this protein is Ribose-5-phosphate isomerase A.